The chain runs to 293 residues: Light-independent protochlorophyllide reductase iron-sulfur ATP-binding protein (293 aa).

Residues 10–15 (GIGKST) and K39 each bind ATP. S14 is a binding site for Mg(2+). C95 and C129 together coordinate [4Fe-4S] cluster. 180 to 181 (NR) is a binding site for ATP.

Belongs to the NifH/BchL/ChlL family. Homodimer. Protochlorophyllide reductase is composed of three subunits; ChlL, ChlN and ChlB. [4Fe-4S] cluster is required as a cofactor.

It localises to the plastid. The protein localises to the chloroplast. It catalyses the reaction chlorophyllide a + oxidized 2[4Fe-4S]-[ferredoxin] + 2 ADP + 2 phosphate = protochlorophyllide a + reduced 2[4Fe-4S]-[ferredoxin] + 2 ATP + 2 H2O. It participates in porphyrin-containing compound metabolism; chlorophyll biosynthesis (light-independent). In terms of biological role, component of the dark-operative protochlorophyllide reductase (DPOR) that uses Mg-ATP and reduced ferredoxin to reduce ring D of protochlorophyllide (Pchlide) to form chlorophyllide a (Chlide). This reaction is light-independent. The L component serves as a unique electron donor to the NB-component of the complex, and binds Mg-ATP. This chain is Light-independent protochlorophyllide reductase iron-sulfur ATP-binding protein, found in Adiantum capillus-veneris (Maidenhair fern).